The chain runs to 80 residues: Exodeoxyribonuclease 7 small subunit (80 aa).

The protein belongs to the XseB family. In terms of assembly, heterooligomer composed of large and small subunits.

It is found in the cytoplasm. It carries out the reaction Exonucleolytic cleavage in either 5'- to 3'- or 3'- to 5'-direction to yield nucleoside 5'-phosphates.. Functionally, bidirectionally degrades single-stranded DNA into large acid-insoluble oligonucleotides, which are then degraded further into small acid-soluble oligonucleotides. This is Exodeoxyribonuclease 7 small subunit from Vibrio campbellii (strain ATCC BAA-1116).